A 160-amino-acid polypeptide reads, in one-letter code: Eosinophil cationic protein (160 aa).

Residues 1-27 (MVPKLFTSQICLLLLLGLMGVEGSLHA) form the signal peptide. Residues 28–72 (RPPQFTKAQWFAIQHINVNPPRCTIAMRVINNYQRRCKNQNTFLR) are required for nearly all of the bactericidal activities; partially involved in LPS-binding. His-42 (proton acceptor) is an active-site residue. Disulfide bonds link Cys-50-Cys-110, Cys-64-Cys-123, Cys-82-Cys-138, and Cys-89-Cys-98. The residue at position 60 (Tyr-60) is a 3'-nitrotyrosine. 65–69 (KNQNT) contacts substrate. N-linked (GlcNAc...) asparagine glycans are attached at residues Asn-92 and Asn-119. The Proton donor role is filled by His-155.

The protein belongs to the pancreatic ribonuclease family. In terms of assembly, interacts with bacterial lipopolysaccharide (LPS) and lipoteichoic acid (LTA). In vitro interacts with phospholipid bilayers.

It is found in the secreted. In terms of biological role, cytotoxin and helminthotoxin with low-efficiency ribonuclease activity. Possesses a wide variety of biological activities. Exhibits antibacterial activity. The polypeptide is Eosinophil cationic protein (RNASE3) (Macaca fascicularis (Crab-eating macaque)).